The primary structure comprises 364 residues: MAQQWSLQRLAGRHPQDSYEDSTQSSIFTYTNSNSTRGPFEGPNYHIAPRWVYHLTSVWMIFVVTASVFTNGLVLAATMKFKKLRHPLNWILVNLAVADLAETVIASTISIVNQVSGYFVLGHPMCVLEGYTVSLCGITGLWSLAIISWERWMVVCKPFGNVRFDAKLAIVGIAFSWIWAAVWTAPPIFGWSRYWPHGLKTSCGPDVFSGSSYPGVQSYMIVLMVTCCIIPLAIIMLCYLQVWLAIRAVAKQQKESESTQKAEKEVTRMVVVMIFAYCVCWGPYTFFACFAAANPGYAFHPLMAALPAYFAKSATIYNPVIYVFMNRQFRNCILQLFGKKVDDGSELSSASKTEVSSVSSVSPA.

A disordered region spans residues 1-23; that stretch reads MAQQWSLQRLAGRHPQDSYEDST. The Extracellular segment spans residues 1–52; sequence MAQQWSLQRLAGRHPQDSYEDSTQSSIFTYTNSNSTRGPFEGPNYHIAPRWV. The O-linked (GlcNAc) serine glycan is linked to Ser22. Residue Asn34 is glycosylated (N-linked (GlcNAc...) asparagine). The helical transmembrane segment at 53 to 77 threads the bilayer; it reads YHLTSVWMIFVVTASVFTNGLVLAA. Over 78-89 the chain is Cytoplasmic; that stretch reads TMKFKKLRHPLN. The helical transmembrane segment at 90–115 threads the bilayer; the sequence is WILVNLAVADLAETVIASTISIVNQV. Residues 116 to 129 lie on the Extracellular side of the membrane; sequence SGYFVLGHPMCVLE. Residues Cys126 and Cys203 are joined by a disulfide bond. A helical membrane pass occupies residues 130–149; the sequence is GYTVSLCGITGLWSLAIISW. Topologically, residues 150-168 are cytoplasmic; it reads ERWMVVCKPFGNVRFDAKL. Residues 169 to 192 form a helical membrane-spanning segment; it reads AIVGIAFSWIWAAVWTAPPIFGWS. Residues 193–218 are Extracellular-facing; that stretch reads RYWPHGLKTSCGPDVFSGSSYPGVQS. Residues 219 to 246 traverse the membrane as a helical segment; that stretch reads YMIVLMVTCCIIPLAIIMLCYLQVWLAI. The Cytoplasmic segment spans residues 247 to 268; it reads RAVAKQQKESESTQKAEKEVTR. A helical transmembrane segment spans residues 269–292; sequence MVVVMIFAYCVCWGPYTFFACFAA. Residues 293-300 lie on the Extracellular side of the membrane; sequence ANPGYAFH. The helical transmembrane segment at 301–325 threads the bilayer; sequence PLMAALPAYFAKSATIYNPVIYVFM. Lys312 carries the post-translational modification N6-(retinylidene)lysine. Residues 326-364 lie on the Cytoplasmic side of the membrane; it reads NRQFRNCILQLFGKKVDDGSELSSASKTEVSSVSSVSPA.

It belongs to the G-protein coupled receptor 1 family. Opsin subfamily. In terms of processing, phosphorylated on some or all of the serine and threonine residues present in the C-terminal region. In terms of tissue distribution, the three color pigments are found in the cone photoreceptor cells.

The protein resides in the membrane. Its function is as follows. Visual pigments are the light-absorbing molecules that mediate vision. They consist of an apoprotein, opsin, covalently linked to cis-retinal. In Homo sapiens (Human), this protein is Long-wave-sensitive opsin 1 (OPN1LW).